Consider the following 705-residue polypeptide: Elongation factor G (705 aa).

The 281-residue stretch at 7–287 (HLTRNIGIMA…YVCAFLPSPL (281 aa)) folds into the tr-type G domain. GTP is bound by residues 16 to 23 (AHIDAGKT), 84 to 88 (DTPGH), and 138 to 141 (NKMD). The disordered stretch occupies residues 291-312 (NVVGTNPDTGAEEDRKPSEDDK). Basic and acidic residues predominate over residues 302-312 (EEDRKPSEDDK).

The protein belongs to the TRAFAC class translation factor GTPase superfamily. Classic translation factor GTPase family. EF-G/EF-2 subfamily.

It localises to the cytoplasm. Catalyzes the GTP-dependent ribosomal translocation step during translation elongation. During this step, the ribosome changes from the pre-translocational (PRE) to the post-translocational (POST) state as the newly formed A-site-bound peptidyl-tRNA and P-site-bound deacylated tRNA move to the P and E sites, respectively. Catalyzes the coordinated movement of the two tRNA molecules, the mRNA and conformational changes in the ribosome. This chain is Elongation factor G, found in Bacteroides fragilis (strain ATCC 25285 / DSM 2151 / CCUG 4856 / JCM 11019 / LMG 10263 / NCTC 9343 / Onslow / VPI 2553 / EN-2).